Reading from the N-terminus, the 591-residue chain is MNKIYRIIWNSALNAWVVVSELTRNHTKRASATVKTAVLATLLFATVQASANNEEQEEDLYLDPVQRTVAVLIVNSDKEGTGEKEKVEENSDWAVYFNEKGVLTAREITLKAGDNLKIKQNGTNFTYSLKKDLTDLTSVGTEKLSFSANGNKVNITSDTKGLNFAKETAGTNGDTTVHLNGIGSTLTDTLLNTGATTNVTNDNVTDDEKKRAASVKDVLNAGWNIKGVKPGTTASDNVDFVRTYDTVEFLSADTKTTTVNVESKDNGKKTEVKIGAKTSVIKEKDGKLVTGKDKGENGSSTDEGEGLVTAKEVIDAVNKAGWRMKTTTANGQTGQADKFETVTSGTNVTFASGKGTTATVSKDDQGNITVMYDVNVGDALNVNQLQNSGWNLDSKAVAGSSGKVISGNVSPSKGKMDETVNINAGNNIEITRNGKNIDIATSMTPQFSSVSLGAGADAPTLSVDGDALNVGSKKDNKPVRITNVAPGVKEGDVTNVAQLKGVAQNLNNRIDNVDGNARAGIAQAIATAGLVQAYLPGKSMMAIGGGTYRGEAGYAIGYSSISDGGNWIIKGTASGNSRGHFGASASVGYQW.

The signal sequence occupies residues 1 to 51 (MNKIYRIIWNSALNAWVVVSELTRNHTKRASATVKTAVLATLLFATVQASA). The interval 52-503 (NNEEQEEDLY…TNVAQLKGVA (452 aa)) is surface exposed passenger domain. Positions 504 to 591 (QNLNNRIDNV…GASASVGYQW (88 aa)) are translocator domain. The next 4 membrane-spanning stretches (beta stranded) occupy residues 537–547 (GKSMMAIGGGT), 551–561 (EAGYAIGYSSI), 570–576 (KGTASGN), and 580–591 (HFGASASVGYQW).

This sequence belongs to the autotransporter-2 (AT-2) (TC 1.B.40) family. In terms of assembly, homotrimer.

It is found in the cell surface. The protein localises to the cell outer membrane. Involved in adhesion of capsulated meningococci to host epithelial cells. Interacts with laminin and heparan sulfate, promoting the adherence to the extracellular matrix (ECM) components. The protein is Autotransporter adhesin NhhA of Neisseria meningitidis serogroup B (strain ATCC BAA-335 / MC58).